We begin with the raw amino-acid sequence, 359 residues long: DNA polymerase IV (359 aa).

A UmuC domain is found at 4–185; it reads IIHIDMDCYF…LPLSKIPGVG (182 aa). Residues aspartate 8 and aspartate 103 each contribute to the Mg(2+) site. Glutamate 104 is a catalytic residue.

Belongs to the DNA polymerase type-Y family. Monomer. It depends on Mg(2+) as a cofactor.

Its subcellular location is the cytoplasm. It carries out the reaction DNA(n) + a 2'-deoxyribonucleoside 5'-triphosphate = DNA(n+1) + diphosphate. In terms of biological role, poorly processive, error-prone DNA polymerase involved in untargeted mutagenesis. Copies undamaged DNA at stalled replication forks, which arise in vivo from mismatched or misaligned primer ends. These misaligned primers can be extended by PolIV. Exhibits no 3'-5' exonuclease (proofreading) activity. May be involved in translesional synthesis, in conjunction with the beta clamp from PolIII. This chain is DNA polymerase IV, found in Shewanella frigidimarina (strain NCIMB 400).